We begin with the raw amino-acid sequence, 225 residues long: Orotate phosphoribosyltransferase (225 aa).

Lysine 29 provides a ligand contact to 5-phospho-alpha-D-ribose 1-diphosphate. Position 37–38 (37–38 (FF)) interacts with orotate. 5-phospho-alpha-D-ribose 1-diphosphate-binding positions include 75-76 (YK), arginine 105, lysine 106, lysine 109, histidine 111, and 130-138 (DDVITAGTS). Orotate-binding residues include threonine 134 and arginine 162.

It belongs to the purine/pyrimidine phosphoribosyltransferase family. PyrE subfamily. Homodimer. Mg(2+) is required as a cofactor.

The catalysed reaction is orotidine 5'-phosphate + diphosphate = orotate + 5-phospho-alpha-D-ribose 1-diphosphate. It functions in the pathway pyrimidine metabolism; UMP biosynthesis via de novo pathway; UMP from orotate: step 1/2. In terms of biological role, catalyzes the transfer of a ribosyl phosphate group from 5-phosphoribose 1-diphosphate to orotate, leading to the formation of orotidine monophosphate (OMP). The protein is Orotate phosphoribosyltransferase of Bordetella petrii (strain ATCC BAA-461 / DSM 12804 / CCUG 43448).